The primary structure comprises 85 residues: Small ribosomal subunit protein bS16 (85 aa).

The protein belongs to the bacterial ribosomal protein bS16 family.

In Metamycoplasma arthritidis (strain 158L3-1) (Mycoplasma arthritidis), this protein is Small ribosomal subunit protein bS16.